The primary structure comprises 449 residues: MREILHIQGGQCGNQIGSKFWEVICDEHGIDSTGRYSGDTADLQLERINVYYNEASGGRYVPRAVLMDLEPGTMDSIRSGPFGQIFRPDNFVFGQSGAGNNWAKGHYTEGAELIDAVLDVVRKEAENCDCLQGFQVCHSLGGGTGSGMGTLLISKIREEYPDRMMLTFSVFPSPKVSDTVVEPYNATLSVHQLVENADECMVLDNEALYDICFRTLKLSTPSFGDLNHLISATMSGVTCSLRFPGQLNSDLRKLAVNLIPFPRLHFFMVGFAPLTSRGSQQYISLTVPELTQQMWDSKNMMCAADPRHGRYLTASAIFRGQMSTKEVDEQILNIQNKNSSYFVEWIPNNVKSSVCDIPPKGLKMAATFVGNSTSIQEMFRRVSEQFTAMFRRKAFLHWYTGEGMDEMEFTEAESNMNDLVAEYQQYQDATADEEGEYDVEEEEEGDYET.

Residues glutamine 11, glutamate 70, serine 139, glycine 143, threonine 144, glycine 145, asparagine 205, and asparagine 227 each coordinate GTP. Residue glutamate 70 participates in Mg(2+) binding. The disordered stretch occupies residues 427 to 449 (QDATADEEGEYDVEEEEEGDYET). The segment covering 430–449 (TADEEGEYDVEEEEEGDYET) has biased composition (acidic residues).

It belongs to the tubulin family. As to quaternary structure, dimer of alpha and beta chains. A typical microtubule is a hollow water-filled tube with an outer diameter of 25 nm and an inner diameter of 15 nM. Alpha-beta heterodimers associate head-to-tail to form protofilaments running lengthwise along the microtubule wall with the beta-tubulin subunit facing the microtubule plus end conferring a structural polarity. Microtubules usually have 13 protofilaments but different protofilament numbers can be found in some organisms and specialized cells. Requires Mg(2+) as cofactor.

The protein resides in the cytoplasm. The protein localises to the cytoskeleton. Its function is as follows. Tubulin is the major constituent of microtubules, a cylinder consisting of laterally associated linear protofilaments composed of alpha- and beta-tubulin heterodimers. Microtubules grow by the addition of GTP-tubulin dimers to the microtubule end, where a stabilizing cap forms. Below the cap, tubulin dimers are in GDP-bound state, owing to GTPase activity of alpha-tubulin. This is Tubulin beta-5 chain (TUBB5) from Arabidopsis thaliana (Mouse-ear cress).